Here is a 60-residue protein sequence, read N- to C-terminus: Small integral membrane protein 3 (60 aa).

A helical transmembrane segment spans residues 20 to 40 (IWVIVLIILATIVIMTSLLLC).

It localises to the membrane. This chain is Small integral membrane protein 3 (SMIM3), found in Homo sapiens (Human).